The following is a 594-amino-acid chain: P-granule-associated novel protein 1 (594 aa).

The N-terminal stretch at 1 to 18 (MRSLLSFVLLALARIAIS) is a signal peptide. Topologically, residues 19 to 513 (EETKSCIDIE…PEEEEVYRSG (495 aa)) are extracellular. LRR repeat units follow at residues 78–101 (GTEL…LFEN), 103–124 (FAKQ…SFQS), 125–149 (LGGS…LFTG), 150–173 (LKSL…AFEE), 175–197 (KKVE…TFDG), 198–221 (MKNL…AFRG), 222–245 (LNSL…IFSA), 246–269 (LKNL…SFPK), 271–290 (EKLV…KLKD), 291–315 (LPSL…MFGL), 318–341 (SDRI…AFQH), 343–365 (PNLI…SPSQ), 374–397 (LKKL…ELPK), 399–419 (LSSL…ALEG), and 420–442 (MEIK…TFDS). A helical membrane pass occupies residues 514-534 (WITVAATILTIVTIVIMVIIA). At 535–594 (MLYFKDARYQFPLRGRRSDSDLHKLIENDPLNIASDSILVVPAMPKRNTGPKKTVRFQNF) the chain is on the cytoplasmic side.

In terms of assembly, interacts with glh-1. Interacts (via LRR regions) with myrf-1 (via C-terminus); the interaction promotes the role of myrf-1 in the synaptic remodeling of DD GABAergic motor neurons at the cell membrane. In terms of tissue distribution, expressed in the germline and somatic cells. Expressed in the germline and somatic cells. Expressed at higher levels in germline cells relative to somatic cells. As to expression, expressed in germline cells. In terms of tissue distribution, highly expressed in the pharynx and at lower levels in the intestine, but not detected in other tissues. Other studies suggest a broader expression pattern in somatic tissues: from embryogenesis to adult stages, expressed strongly in body wall muscle, vulva, somatic gonad and pharynx, at lower levels in the nerve ring, hypodermis, and rectal epithelia, and very weakly in the intestine.

It is found in the cytoplasm. It localises to the apical cell membrane. Regulates diverse developmental processes including larval molting and gonad maturation. Functionally, promotes the localization of myrf-1 and myrf-2 to the cell membrane. In association with myrf-1, promotes the synaptic remodeling of DD GABAergic motor neurons whereby new synapses form in the dorsal processes of DD neurons. This is P-granule-associated novel protein 1 from Caenorhabditis elegans.